Here is a 152-residue protein sequence, read N- to C-terminus: Small ribosomal subunit protein uS15 (152 aa).

It belongs to the universal ribosomal protein uS15 family. Part of the 30S ribosomal subunit.

The sequence is that of Small ribosomal subunit protein uS15 from Saccharolobus solfataricus (strain ATCC 35092 / DSM 1617 / JCM 11322 / P2) (Sulfolobus solfataricus).